The primary structure comprises 458 residues: Dynein regulatory complex protein 10 (458 aa).

3 coiled-coil regions span residues 96-137 (GQTL…HKVN), 209-255 (IQDI…KNHL), and 285-379 (QVRL…IRAE). Residues 397–426 (MVRAATLIQAVWKGYLVRSILRSKKKKRGK) enclose the IQ domain. The tract at residues 419–458 (SKKKKRGKGKGKDKGKGKEKPKEEKAKEKKPKAKGKGKKK) is disordered. A compositionally biased stretch (basic and acidic residues) spans 428–445 (KGKDKGKGKEKPKEEKAK). Residues 446–458 (EKKPKAKGKGKKK) show a composition bias toward basic residues.

It belongs to the DRC10 family. In terms of assembly, component of the nexin-dynein regulatory complex (N-DRC). Interacts with CFAP52.

The protein resides in the cytoplasm. Its subcellular location is the cytoskeleton. It localises to the flagellum axoneme. Functionally, component of the nexin-dynein regulatory complex (N-DRC), a key regulator of ciliary/flagellar motility which maintains the alignment and integrity of the distal axoneme and regulates microtubule sliding in motile axonemes. The protein is Dynein regulatory complex protein 10 (Iqcd) of Mus musculus (Mouse).